Reading from the N-terminus, the 785-residue chain is Cadherin-7 (785 aa).

The N-terminal stretch at 1 to 27 (MKLGKVEFCHFLQLIALFLCFSGMSQA) is a signal peptide. Residues 28 to 47 (ELSRSRSKPYFQSGRSRTKR) constitute a propeptide that is removed on maturation. The Extracellular portion of the chain corresponds to 28-607 (ELSRSRSKPY…AYVLPAGLST (580 aa)). 5 consecutive Cadherin domains span residues 49-153 (WVWN…EPKF), 154-262 (LDGP…PPRF), 263-377 (PRRS…PPVF), 378-482 (SSPL…APEF), and 482-599 (FAMD…AEAY). N-linked (GlcNAc...) asparagine glycosylation is found at N449 and N530. The chain crosses the membrane as a helical span at residues 608 to 628 (GALIAILACVLTLLVLILLIV). Topologically, residues 629–785 (TMRRRKKEPL…YGTGQESLYS (157 aa)) are cytoplasmic.

It is found in the cell membrane. Its function is as follows. Cadherins are calcium-dependent cell adhesion proteins. They preferentially interact with themselves in a homophilic manner in connecting cells; cadherins may thus contribute to the sorting of heterogeneous cell types. This is Cadherin-7 (CDH7) from Homo sapiens (Human).